The sequence spans 60 residues: Large ribosomal subunit protein bL32 (60 aa).

Positions 1 to 60 are disordered; it reads MAVQQNKKSPSKRGMHRSHDFLVNPATAIEPNTGETHLRHHISPNGFYRGRKVLKTKADE. Over residues 49–60 the composition is skewed to basic residues; it reads RGRKVLKTKADE.

Belongs to the bacterial ribosomal protein bL32 family.

The polypeptide is Large ribosomal subunit protein bL32 (Bordetella bronchiseptica (strain ATCC BAA-588 / NCTC 13252 / RB50) (Alcaligenes bronchisepticus)).